The primary structure comprises 299 residues: Taste receptor type 2 member 4 (299 aa).

The Extracellular portion of the chain corresponds to 1–9 (MLQLFYFSA). Residues 10–30 (IIASVILNFVGIIMNLFIMVV) traverse the membrane as a helical segment. At 31–46 (NCKTWVKSHRISSSDR) the chain is on the cytoplasmic side. The chain crosses the membrane as a helical span at residues 47–67 (ILFSLGITRFLMLGLFLVNTI). Residues 68–81 (FFVSSNTERSVYLS) lie on the Extracellular side of the membrane. The chain crosses the membrane as a helical span at residues 82–102 (AFFVLCFMFXDSSSLWFVTLL). The Cytoplasmic segment spans residues 103–131 (NILYCVKITNFQHSVFLLLKQNISPKIPR). The helical transmembrane segment at 132–152 (LLLACVLISAFTTCLYITLSQ) threads the bilayer. The Extracellular segment spans residues 153 to 172 (ASPFPELVTKRNNTSFNTHE). 2 N-linked (GlcNAc...) asparagine glycosylation sites follow: N164 and N165. Residues 173–193 (GILSLVVSLVLSSSLQFIINV) traverse the membrane as a helical segment. Topologically, residues 194 to 230 (TSASLLIHSLRRHIQKMQKNATGFWNPQTEAHVGAMK) are cytoplasmic. The chain crosses the membrane as a helical span at residues 231 to 251 (LMIYFLILYIPYSVATLVQYL). Residues 252–262 (PFYVGMDMGTK) lie on the Extracellular side of the membrane. Residues 263-283 (AICLIFATLYSPGHSVLIIIT) traverse the membrane as a helical segment. Residues 284–299 (HPKLKTTAKKILCFKK) lie on the Cytoplasmic side of the membrane.

Belongs to the G-protein coupled receptor T2R family.

The protein resides in the membrane. It is found in the cell projection. Its subcellular location is the cilium membrane. Functionally, gustducin-coupled receptor implicated in the perception of bitter compounds in the oral cavity and the gastrointestinal tract. Signals through PLCB2 and the calcium-regulated cation channel TRPM5. In airway epithelial cells, binding of denatonium increases the intracellular calcium ion concentration and stimulates ciliary beat frequency. This chain is Taste receptor type 2 member 4 (TAS2R4), found in Pongo pygmaeus (Bornean orangutan).